The chain runs to 316 residues: Homoserine O-succinyltransferase (316 aa).

The active-site Acyl-thioester intermediate is the C142. K163 and S192 together coordinate substrate. H235 acts as the Proton acceptor in catalysis. Residue E237 is part of the active site. Position 249 (R249) interacts with substrate.

This sequence belongs to the MetA family.

The protein resides in the cytoplasm. The enzyme catalyses L-homoserine + succinyl-CoA = O-succinyl-L-homoserine + CoA. The protein operates within amino-acid biosynthesis; L-methionine biosynthesis via de novo pathway; O-succinyl-L-homoserine from L-homoserine: step 1/1. Its function is as follows. Transfers a succinyl group from succinyl-CoA to L-homoserine, forming succinyl-L-homoserine. The sequence is that of Homoserine O-succinyltransferase from Shewanella amazonensis (strain ATCC BAA-1098 / SB2B).